Reading from the N-terminus, the 147-residue chain is uncharacterized protein (147 aa).

Positions Leu-44 to Ile-147 constitute an HTH LytTR-type domain.

The protein localises to the cytoplasm. This is an uncharacterized protein from Staphylococcus aureus (strain MRSA252).